Consider the following 420-residue polypeptide: Histidine--tRNA ligase (420 aa).

This sequence belongs to the class-II aminoacyl-tRNA synthetase family. In terms of assembly, homodimer.

The protein resides in the cytoplasm. The catalysed reaction is tRNA(His) + L-histidine + ATP = L-histidyl-tRNA(His) + AMP + diphosphate + H(+). The polypeptide is Histidine--tRNA ligase (Acholeplasma laidlawii (strain PG-8A)).